A 463-amino-acid polypeptide reads, in one-letter code: Chromosomal replication initiator protein DnaA (463 aa).

The tract at residues 1 to 83 is domain I, interacts with DnaA modulators; sequence MSLTLWQQCL…LRFEVGSKPV (83 aa). Residues 83-126 are domain II; it reads VAQAISQPVMVSAHASAPGVVSRPAPTRPSWDNVPALAELSYRS. Residues 127–343 are domain III, AAA+ region; sequence NVNTKHNFDN…GALNRVIANA (217 aa). Positions 171, 173, 174, and 175 each coordinate ATP. The interval 344-463 is domain IV, binds dsDNA; the sequence is NFTGRAITID…FSNLIRTLSS (120 aa).

It belongs to the DnaA family. As to quaternary structure, oligomerizes as a right-handed, spiral filament on DNA at oriC.

The protein localises to the cytoplasm. In terms of biological role, plays an essential role in the initiation and regulation of chromosomal replication. ATP-DnaA binds to the origin of replication (oriC) to initiate formation of the DNA replication initiation complex once per cell cycle. Binds the DnaA box (a 9 base pair repeat at the origin) and separates the double-stranded (ds)DNA. Forms a right-handed helical filament on oriC DNA; dsDNA binds to the exterior of the filament while single-stranded (ss)DNA is stabiized in the filament's interior. The ATP-DnaA-oriC complex binds and stabilizes one strand of the AT-rich DNA unwinding element (DUE), permitting loading of DNA polymerase. After initiation quickly degrades to an ADP-DnaA complex that is not apt for DNA replication. Binds acidic phospholipids. The sequence is that of Chromosomal replication initiator protein DnaA from Erwinia tasmaniensis (strain DSM 17950 / CFBP 7177 / CIP 109463 / NCPPB 4357 / Et1/99).